Reading from the N-terminus, the 403-residue chain is Indoleamine 2,3-dioxygenase 1 (403 aa).

His346 contributes to the heme b binding site. Residues 360–381 are disordered; the sequence is QQPKENKTSEDPSKLEAKGTGG. Basic and acidic residues predominate over residues 363 to 376; it reads KENKTSEDPSKLEA.

Belongs to the indoleamine 2,3-dioxygenase family. In terms of assembly, monomer. Requires heme b as cofactor. In terms of tissue distribution, expressed in mature dendritic cells located in lymphoid organs (including lymph nodes, spleen, tonsils, Peyers's patches, the gut lamina propria, and the thymic medulla), in some epithelial cells of the female genital tract, as well as in endothelial cells of term placenta and in lung parenchyma. Weakly or not expressed in most normal tissues, but mostly inducible in most tissues. Expressed in more than 50% of tumors, either by tumoral, stromal, or endothelial cells (expression in tumor is associated with a worse clinical outcome). Not overexpressed in tumor-draining lymph nodes.

The protein resides in the cytoplasm. The protein localises to the cytosol. It carries out the reaction D-tryptophan + O2 = N-formyl-D-kynurenine. The catalysed reaction is L-tryptophan + O2 = N-formyl-L-kynurenine. It functions in the pathway amino-acid degradation; L-tryptophan degradation via kynurenine pathway; L-kynurenine from L-tryptophan: step 1/2. With respect to regulation, activity is inhibited by and MTH-trp (methylthiohydantoin-DL-tryptophan), modestly inhibited by L-1MT (1-methyl-L-tryptophan) but not D-1MT (1-methyl-D-tryptophan). Functionally, catalyzes the first and rate limiting step of the catabolism of the essential amino acid tryptophan along the kynurenine pathway. Involved in the peripheral immune tolerance, contributing to maintain homeostasis by preventing autoimmunity or immunopathology that would result from uncontrolled and overreacting immune responses. Tryptophan shortage inhibits T lymphocytes division and accumulation of tryptophan catabolites induces T-cell apoptosis and differentiation of regulatory T-cells. Acts as a suppressor of anti-tumor immunity. Limits the growth of intracellular pathogens by depriving tryptophan. Protects the fetus from maternal immune rejection. This Homo sapiens (Human) protein is Indoleamine 2,3-dioxygenase 1.